A 250-amino-acid polypeptide reads, in one-letter code: NADH-quinone oxidoreductase subunit B 2 (250 aa).

Residues cysteine 41, cysteine 42, cysteine 107, and cysteine 137 each coordinate [4Fe-4S] cluster.

Belongs to the complex I 20 kDa subunit family. As to quaternary structure, NDH-1 is composed of 14 different subunits. Subunits NuoB, C, D, E, F, and G constitute the peripheral sector of the complex. [4Fe-4S] cluster is required as a cofactor.

Its subcellular location is the cell membrane. The enzyme catalyses a quinone + NADH + 5 H(+)(in) = a quinol + NAD(+) + 4 H(+)(out). Its function is as follows. NDH-1 shuttles electrons from NADH, via FMN and iron-sulfur (Fe-S) centers, to quinones in the respiratory chain. The immediate electron acceptor for the enzyme in this species is believed to be ubiquinone. Couples the redox reaction to proton translocation (for every two electrons transferred, four hydrogen ions are translocated across the cytoplasmic membrane), and thus conserves the redox energy in a proton gradient. The chain is NADH-quinone oxidoreductase subunit B 2 from Herpetosiphon aurantiacus (strain ATCC 23779 / DSM 785 / 114-95).